The sequence spans 407 residues: MSAVPLKNTDAAHDGVRSISVLGATGSIGDSTMDLLRAAPEKYRVEALTGNANVAGLAKLAKEFNARFVAVADPARLGELRAALAGTDIAYGAGESAVIEAAARPADWVMAAISGAAGLKPALAAVDRGATVALANKECLVCAGDFFMSRAVAAGSCILPADSEHNALFQALASGNRHELTRVIITASGGPFRTWSAADIEQATLAQALKHPNWSMGQKITIDSASMMNKGLEVIEASYLFALSPDEIDVLVHPQSIVHGMVEFADHSVVAQLGAPDMRIPIAHCLGWPDRIVGRAARLDLAKIGQLTFEAPDFERFPGLRLAYDALRAGNGATTVYNAANEIAVAAFIAQKIRFGAIARLVEDTLNAWIRAGNLAPLGSADDAIAVDHNARKMAATLLPQIAAKAS.

NADPH is bound by residues threonine 25, glycine 26, serine 27, isoleucine 28, asparagine 53, and asparagine 136. Lysine 137 is a 1-deoxy-D-xylulose 5-phosphate binding site. Glutamate 138 contributes to the NADPH binding site. Aspartate 162 is a Mn(2+) binding site. Serine 163, glutamate 164, serine 188, and histidine 211 together coordinate 1-deoxy-D-xylulose 5-phosphate. Glutamate 164 contacts Mn(2+). Glycine 217 contacts NADPH. Residues serine 224, asparagine 229, lysine 230, and glutamate 233 each contribute to the 1-deoxy-D-xylulose 5-phosphate site. Glutamate 233 provides a ligand contact to Mn(2+).

Belongs to the DXR family. Mg(2+) is required as a cofactor. Requires Mn(2+) as cofactor.

The catalysed reaction is 2-C-methyl-D-erythritol 4-phosphate + NADP(+) = 1-deoxy-D-xylulose 5-phosphate + NADPH + H(+). Its pathway is isoprenoid biosynthesis; isopentenyl diphosphate biosynthesis via DXP pathway; isopentenyl diphosphate from 1-deoxy-D-xylulose 5-phosphate: step 1/6. Its function is as follows. Catalyzes the NADPH-dependent rearrangement and reduction of 1-deoxy-D-xylulose-5-phosphate (DXP) to 2-C-methyl-D-erythritol 4-phosphate (MEP). The polypeptide is 1-deoxy-D-xylulose 5-phosphate reductoisomerase (Rhodopseudomonas palustris (strain HaA2)).